Here is a 293-residue protein sequence, read N- to C-terminus: Formamidopyrimidine-DNA glycosylase (293 aa).

The active-site Schiff-base intermediate with DNA is the P2. The active-site Proton donor is the E3. Catalysis depends on K60, which acts as the Proton donor; for beta-elimination activity. H110, R129, and R174 together coordinate DNA. The segment at 259–293 (NVYRRTGKECRKCGNLIEKQKIAGRSTHWCPNCQK) adopts an FPG-type zinc-finger fold. R283 acts as the Proton donor; for delta-elimination activity in catalysis.

The protein belongs to the FPG family. In terms of assembly, monomer. The cofactor is Zn(2+).

The catalysed reaction is Hydrolysis of DNA containing ring-opened 7-methylguanine residues, releasing 2,6-diamino-4-hydroxy-5-(N-methyl)formamidopyrimidine.. The enzyme catalyses 2'-deoxyribonucleotide-(2'-deoxyribose 5'-phosphate)-2'-deoxyribonucleotide-DNA = a 3'-end 2'-deoxyribonucleotide-(2,3-dehydro-2,3-deoxyribose 5'-phosphate)-DNA + a 5'-end 5'-phospho-2'-deoxyribonucleoside-DNA + H(+). Functionally, involved in base excision repair of DNA damaged by oxidation or by mutagenic agents. Acts as a DNA glycosylase that recognizes and removes damaged bases. Has a preference for oxidized purines, such as 7,8-dihydro-8-oxoguanine (8-oxoG). Has AP (apurinic/apyrimidinic) lyase activity and introduces nicks in the DNA strand. Cleaves the DNA backbone by beta-delta elimination to generate a single-strand break at the site of the removed base with both 3'- and 5'-phosphates. This chain is Formamidopyrimidine-DNA glycosylase, found in Prochlorococcus marinus (strain MIT 9312).